Here is a 145-residue protein sequence, read N- to C-terminus: uncharacterized protein (145 aa).

To R.meliloti R00649.

This is an uncharacterized protein from Agrobacterium fabrum (strain C58 / ATCC 33970) (Agrobacterium tumefaciens (strain C58)).